The sequence spans 229 residues: Lantibiotic transport ATP-binding protein SrtF (229 aa).

In terms of domain architecture, ABC transporter spans 2 to 225; sequence LKIQNLKKSY…EELFNNQILF (224 aa). 34-41 serves as a coordination point for ATP; the sequence is GPNGAGKS.

It belongs to the ABC transporter superfamily.

Its function is as follows. Implicated in the export process of the lantibiotic SrtA. The chain is Lantibiotic transport ATP-binding protein SrtF (srtF) from Streptococcus pyogenes serotype M1.